We begin with the raw amino-acid sequence, 133 residues long: Minor spike protein H (133 aa).

It belongs to the microviridae H protein family.

The protein localises to the virion. Its function is as follows. Probably triggers with protein G the injection of the phage DNA into the host upon conformational changes induced by virus-host receptor interaction. This is Minor spike protein H from Spiroplasma virus 4 (SpV4).